The following is a 1064-amino-acid chain: Valine--tRNA ligase, mitochondrial (1064 aa).

The transit peptide at 1–26 (MPHLPLASFRPPFWGLRHSRGLPRFH) directs the protein to the mitochondrion. The tract at residues 25–65 (FHSVSTQSEPHGSPISRRNREAKQKRLREKQATLETDIAGE) is disordered. A compositionally biased stretch (basic and acidic residues) spans 42–56 (RNREAKQKRLREKQA). A 'HIGH' region motif is present at residues 146-156 (PNVTGSLHIGH). Positions 659-663 (KMSKS) match the 'KMSKS' region motif. Residue Lys662 participates in ATP binding.

The protein belongs to the class-I aminoacyl-tRNA synthetase family.

It localises to the mitochondrion. The catalysed reaction is tRNA(Val) + L-valine + ATP = L-valyl-tRNA(Val) + AMP + diphosphate. Functionally, catalyzes the attachment of valine to tRNA(Val) in a two-step reaction: valine is first activated by ATP to form Val-AMP and then transferred to the acceptor end of tRNA(Val). This chain is Valine--tRNA ligase, mitochondrial (VARS2), found in Macaca mulatta (Rhesus macaque).